We begin with the raw amino-acid sequence, 1085 residues long: Activating transcription factor 7-interacting protein 1 (1085 aa).

Disordered regions lie at residues 1 to 22 (MDNT…RASD), 47 to 109 (GKHE…VNVT), 127 to 245 (LGSN…NTDS), 329 to 381 (PNKS…VHSK), 469 to 499 (AAKE…ANAN), 517 to 560 (RNVG…TSSP), 650 to 843 (ASTN…TTIH), 889 to 910 (NSVR…QTGS), and 932 to 975 (GAPQ…ANTS). Residues 54–64 (SDLNSPLSNTD) show a composition bias toward polar residues. Basic and acidic residues-rich tracts occupy residues 82–91 (SEIKRPESRA) and 133–150 (NFHE…RESD). 2 stretches are compositionally biased toward polar residues: residues 151–165 (TPSG…NSFS) and 173–182 (NDITIISNSP). Composition is skewed to basic and acidic residues over residues 347–379 (EREV…DSVH) and 469–479 (AAKEDMKKKQE). Residues 446–480 (NKRHKTVLTELQAKITRLTKRFGAAKEDMKKKQEN) adopt a coiled-coil conformation. Composition is skewed to low complexity over residues 487-499 (SSGK…ANAN), 529-547 (APVS…TPAS), and 651-666 (STNT…VSSP). The span at 667–717 (GVQRNSPASAGSVRTTLAVQAVSTTHPVAQTTRTSLPTVGTSGLHNSTSSR) shows a compositional bias: polar residues. Residues 732 to 743 (TAPTEPPTITAP) show a composition bias toward low complexity. 3 stretches are compositionally biased toward polar residues: residues 746–775 (ENQT…VTGS), 792–810 (SSQA…AQSI), and 830–843 (TGVP…TTIH). Positions 950–968 (PRPVHPAPLPEAPQPPRLP) are enriched in pro residues. The region spanning 976–1082 (LPQKPQLKLA…DPQSTDVISS (107 aa)) is the Fibronectin type-III domain.

The protein belongs to the MCAF family.

It localises to the nucleus. Functionally, recruiter that couples transcriptional factors to general transcription apparatus and thereby modulates transcription regulation and chromatin formation. Can both act as an activator or a repressor depending on the context. Mediates MBD1-dependent transcriptional repression, probably by recruiting complexes containing histone methyltransferase activity. May belong to a complex that represses transcription and couples DNA methylation and histone H3 'Lys-9' trimethylation (H3K9me3). The polypeptide is Activating transcription factor 7-interacting protein 1 (ATF7IP) (Gallus gallus (Chicken)).